Here is a 744-residue protein sequence, read N- to C-terminus: MRDVLEVLEFPRVRALLAERAKTPLGRELALALAPLPREEAEKRHELTGEALSYPYALPEAGTLREAYGRALAGARLSGPELLKAAKALEEAMALKEELLPLKNALSQVAEGIGDHTPFLERVRKALDEEGAVKDEASPRLAQIRRELRPLRQQILDRLYALMDRHREAFQDRFVTLRRERYCVPVRAGMAQKVPGILLDESESGATLFIEPFSVVKLNNRLQALRLKEEEEVNRILRDLSERLAKDEGVPKTLEALGLLDLVQAQAALARDLGLSRPAFGERYELYRAFHPLIPDAVRNSFALDEKNRILLISGPNMGGKTALLKTLGLAVLMAQSGLFVAAEKALLAWPDRVYADIGDEQSLQENLSTFAGHLRRLREMLEEATSHSLVLIDELGSGTDPEEGAALSQAILEALLERGVKGMVTTHLSPLKAFAQGREGIQNASMRFDLEALRPTYELVLGVPGRSYALAIARRLALPEEVLKRAEALLPEGGRLEALLERLEAERLALEAERERLRRELSQVERLRKALAEREARFEEERAERLKALEEEVRAELLKVEAELKALKEKARTEGKRDALRELMALRERYAKKAPPPPPPPGLAPGVLVEVPSLGKRGRVVELRGEEVLVQVGPLKMSLKPQEVKPLPEAEPGKPLLAKPRREVKEVDLRGLTVAEALLEVDQALEEARALGLSTLRLLHGKGTGALRQAIREALRRDKRVESFADAPPGEGGHGVTVVALRP.

An ATP-binding site is contributed by 315 to 322 (GPNMGGKT). The Smr domain maps to 668–743 (VDLRGLTVAE…GHGVTVVALR (76 aa)).

It belongs to the DNA mismatch repair MutS family. MutS2 subfamily. As to quaternary structure, homodimer. Interacts with MutL. Binds to stalled ribosomes, contacting rRNA.

With respect to regulation, nuclease activity is stimulated by interaction with MutL. ATPase activity is stimulated by dsDNA. Functionally, endonuclease that is involved in the suppression of homologous recombination and may thus have a key role in the control of bacterial genetic diversity. Cleaves the phosphate backbone of oligodeoxynucleotides non-sequence-specifically at the 3' side of the phosphates. Preferably incises the branched DNA structures, especially the D-loop structure over the Holliday junction. Has ATPase activity. Binds to dsDNA but not to ssDNA. In terms of biological role, acts as a ribosome collision sensor, splitting the ribosome into its 2 subunits. Detects stalled/collided 70S ribosomes which it binds and splits by an ATP-hydrolysis driven conformational change. Acts upstream of the ribosome quality control system (RQC), a ribosome-associated complex that mediates the extraction of incompletely synthesized nascent chains from stalled ribosomes and their subsequent degradation. Probably generates substrates for RQC. The protein is Endonuclease MutS2 of Thermus thermophilus (strain ATCC 27634 / DSM 579 / HB8).